Reading from the N-terminus, the 185-residue chain is Adenylate kinase (185 aa).

ATP is bound at residue 8 to 16; that stretch reads GIPGSGSTT.

The protein belongs to the archaeal adenylate kinase family.

It is found in the cytoplasm. It catalyses the reaction AMP + ATP = 2 ADP. This Methanothermobacter thermautotrophicus (strain ATCC 29096 / DSM 1053 / JCM 10044 / NBRC 100330 / Delta H) (Methanobacterium thermoautotrophicum) protein is Adenylate kinase (adkA).